The chain runs to 741 residues: T-box transcription factor TBX3 (741 aa).

Positions 107–220 (LEAKELWDQF…NNISDKHGFT (114 aa)) form a DNA-binding region, T-box; first part. The T-box; second part DNA-binding region spans 241–305 (ILNSMHKYQP…NNPFAKGFRD (65 aa)). A Phosphoserine modification is found at Ser369. The interval 369 to 469 (SEAESDAEAE…EGPVATKVDE (101 aa)) is disordered. Basic and acidic residues-rich tracts occupy residues 377–386 (AESKEEHGPE) and 420–437 (SRAR…DSRH). Residues Ser432, Ser438, Ser456, Ser705, Ser736, Ser738, and Ser740 each carry the phosphoserine modification. A compositionally biased stretch (polar residues) spans 438-447 (SPATISSSTR).

Interacts with PML. In adults, highest levels in lung. Also found in brain, heart, kidney, liver and ovary.

It localises to the nucleus. In terms of biological role, transcriptional repressor involved in developmental processes. Binds to the palindromic T site 5'-TTCACACCTAGGTGTGAA-3' DNA sequence, or a half-site, which are present in the regulatory region of several genes. Probably plays a role in limb pattern formation. Required for mammary placode induction, and maintenance of the mammary buds during development. Involved in branching morphogenesis in both developing lungs and adult mammary glands, via negative modulation of target genes; acting redundantly with TBX2. Required, together with TBX2, to maintain cell proliferation in the embryonic lung mesenchyme; perhaps acting downstream of SHH, BMP and TGFbeta signaling. Involved in modulating early inner ear development, acting independently of, and also redundantly with, TBX2 in different subregions of the developing ear. Acts as a negative regulator of PML function in cellular senescence. The sequence is that of T-box transcription factor TBX3 (Tbx3) from Mus musculus (Mouse).